The primary structure comprises 255 residues: MASPGAGRAPPELPERNCGYREVEYWDQRYQGAADSAPYDWFGDFSSFRALLEPELRPEDRILVLGCGNSALSYELFLGGFPNVTSVDYSSVVVAAMQARHAHVPQLRWETMDVRKLDFPSASFDVVLEKGTLDALLAGERDPWTVSSEGVHTVDQVLSEVSRVLVPGGRFISMTSAAPHFRTRHYAQAYYGWSLRHATYGSGFHFHLYLMHKGGKLSVAQLALGAQILSPPRPPTSPCFLQDSDHEDFLSAIQL.

Positions 26 and 30 each coordinate S-adenosyl-L-methionine. Y39 carries the post-translational modification Phosphotyrosine. S-adenosyl-L-methionine is bound by residues W41, G66, 88–89, 113–114, and K130; these read DY and DV. The Required for methyltransferase activity motif lies at 129–134; the sequence is EKGTLD.

It belongs to the methyltransferase superfamily.

It carries out the reaction L-lysyl-[protein] + S-adenosyl-L-methionine = N(6)-methyl-L-lysyl-[protein] + S-adenosyl-L-homocysteine + H(+). It catalyses the reaction N(6)-methyl-L-lysyl-[protein] + S-adenosyl-L-methionine = N(6),N(6)-dimethyl-L-lysyl-[protein] + S-adenosyl-L-homocysteine + H(+). The enzyme catalyses N(6),N(6)-dimethyl-L-lysyl-[protein] + S-adenosyl-L-methionine = N(6),N(6),N(6)-trimethyl-L-lysyl-[protein] + S-adenosyl-L-homocysteine + H(+). Its function is as follows. Protein-lysine methyltransferase that efficiently catalyzes three successive methylations on 'Lys-36' in eukaryotic translation elongation factor 1 alpha (EEF1A1 or EEF1A2). The protein is EEF1A lysine methyltransferase 4 of Homo sapiens (Human).